Reading from the N-terminus, the 774-residue chain is MSLLLTIAKEYKRLCQDAKAAQMMTVGTVSNYTTFKKWTTSRKEKNPSLRMRWAMSSKFPIIANKRMLEEAQIPKEHNNVALWEDTEDVSKRDHVLASASCINYWNFCGPCVNNSEVIKEVYKSRFGRLERRKEIMWKELRFTLVDRQRRRVDTQPVEQRLRTGEIKDLQMWTLFEDEAPLASKFILDNYGLVKEMRSKFANKPLNKEVVAHMLEKQFNPESRFLPVFGAIRPERMELIHALGGETWIQEANTAGISNVDQRKNDIRAVCRKVCLAANASIMNAKSKLVEYIKSTSMRIGETERKLEELILETDDVSPEVTLCKSALGGQLGKTLSFGPMLLKKISGSGVKVKDTVYIQGVRAVQFEYWSEQEEFYGEYKSATALFSRKERSLEWITIGGGINEDRKRLLAMCMIFCRDGDYFKDAPATITMADLSTKLGREIPYQYVMMNWIQKSEDNLEALLYSRGIVETNPGKMGSSMGIDGSKRAIKSLRAVTIQSGKIDMPESKEKIHLELSDNLEAFDSSGRIVATILDLPSDKKVTFQDVSFQHPDLAVLRDEKTAITKGYEALIKRLGTGDNDIPSLIAKKDYLSLYNLPEVKLMAPLIRPNRKGVYSRVARKLVSTQVTTGHYSLHELIKVLPFTYFAPKQGMFEGRLFFSNDSFVEPGVNNNVFSWSKADSSKIYCHGIAIRVPLVVGDEHMDTSLALLEGFSVCENDPRAPMVTRQDLIDVGFGQKVRLFVGQGSVRTFKRTASQRAASSDVNKNVKKIKMSN.

The protein belongs to the influenza viruses PB2 family. In terms of assembly, influenza RNA polymerase is composed of three subunits: PB1, PB2 and PA. Interacts (via N-terminus) with PB1 (via C-terminus). Interacts with nucleoprotein NP (via N-terminus). Interacts with host ANP32A (via C-terminus); this interaction promotes viral RNA synthesis.

Its subcellular location is the virion. The protein localises to the host nucleus. Plays an essential role in transcription initiation and cap-stealing mechanism, in which cellular capped pre-mRNAs are used to generate primers for viral transcription. Recognizes and binds a wide range of cap structures of target pre-RNAs which are subsequently cleaved after 10-13 nucleotides by the viral protein PA. Plays a role in the initiation of the viral genome replication and modulates the activity of the ribonucleoprotein (RNP) complex. This is Polymerase basic protein 2 from Influenza C virus (strain C/Johannesburg/1/1966).